The chain runs to 614 residues: Protein YehQ (614 aa).

SWIM-type zinc fingers lie at residues valine 55–glutamine 89 and serine 151–valine 185.

This chain is Protein YehQ (yehQ), found in Escherichia coli (strain K12).